The sequence spans 179 residues: Ubiquinol-cytochrome c reductase iron-sulfur subunit (179 aa).

Residues 14–35 (FLYVATAAVGAAGVAAVAWPFI) form a helical membrane-spanning segment. The Rieske domain occupies 80–173 (AKEIQSEEAA…YEFVDNTKIR (94 aa)). Residues Cys118, His120, Cys137, and His140 each contribute to the [2Fe-2S] cluster site. Residues Cys123 and Cys139 are joined by a disulfide bond.

It belongs to the Rieske iron-sulfur protein family. In terms of assembly, the main subunits of complex b-c1 are: cytochrome b, cytochrome c1 and the Rieske protein. [2Fe-2S] cluster serves as cofactor.

The protein localises to the cell membrane. The enzyme catalyses a quinol + 2 Fe(III)-[cytochrome c](out) = a quinone + 2 Fe(II)-[cytochrome c](out) + 2 H(+)(out). Functionally, component of the ubiquinol-cytochrome c reductase complex (complex III or cytochrome b-c1 complex), which is a respiratory chain that generates an electrochemical potential coupled to ATP synthesis. The protein is Ubiquinol-cytochrome c reductase iron-sulfur subunit (petA) of Blastochloris viridis (Rhodopseudomonas viridis).